We begin with the raw amino-acid sequence, 133 residues long: Small ribosomal subunit protein uS11 (133 aa).

It belongs to the universal ribosomal protein uS11 family. In terms of assembly, part of the 30S ribosomal subunit. Interacts with proteins S7 and S18. Binds to IF-3.

Functionally, located on the platform of the 30S subunit, it bridges several disparate RNA helices of the 16S rRNA. Forms part of the Shine-Dalgarno cleft in the 70S ribosome. The protein is Small ribosomal subunit protein uS11 of Burkholderia pseudomallei (strain 1106a).